The primary structure comprises 114 residues: UPF0342 protein OEOE_0901 (114 aa).

This sequence belongs to the UPF0342 family.

In Oenococcus oeni (strain ATCC BAA-331 / PSU-1), this protein is UPF0342 protein OEOE_0901.